The chain runs to 339 residues: MDGLETALPSLTDNASLAYSEQCGQETPLENMLFACFYLLDFILAFVGNALALWLFIWDHKSGTPANVFLMHLAVADLSCVLVLPTRLVYHFSGNHWPFGEIPCRLTGFLFYLNMYASIYFLTCISADRFLAIVHPVKSLKLRRPLYAHLACAFLWIVVAVAMAPLLVSPQTVQTNHTVVCLQLYREKASHHALASLAVAFTFPFITTVTCYLLIIRSLRQGPRIEKHLKNKAVRMIAMVLAIFLICFVPYHIHRSVYVLHYRGGGTSCSAQRALALGNRITSCLTSLNGALDPVMYFFVAEKFRHALCNLLCSKRLTGPPPSFEGKTNESSLSARSEL.

The Extracellular segment spans residues M1–C36. An N-linked (GlcNAc...) asparagine glycan is attached at N14. The chain crosses the membrane as a helical span at residues F37–I57. The Cytoplasmic segment spans residues W58–T64. The helical transmembrane segment at P65–P85 threads the bilayer. The Extracellular segment spans residues T86 to R105. C104 and C181 are disulfide-bonded. The helical transmembrane segment at L106–S126 threads the bilayer. At A127 to Y147 the chain is on the cytoplasmic side. A helical transmembrane segment spans residues A148 to V168. The Extracellular segment spans residues S169 to A195. N-linked (GlcNAc...) asparagine glycosylation occurs at N176. The chain crosses the membrane as a helical span at residues S196–I216. Topologically, residues R217–K232 are cytoplasmic. The helical transmembrane segment at A233 to I253 threads the bilayer. At H254–R280 the chain is on the extracellular side. Residues I281–A301 form a helical membrane-spanning segment. The Cytoplasmic portion of the chain corresponds to E302 to L339.

This sequence belongs to the G-protein coupled receptor 1 family. As to expression, expressed in brain, kidney, and heart. Highest level in brain.

The protein resides in the cell membrane. In terms of biological role, dual specificity receptor for uracil nucleotides and cysteinyl leukotrienes (CysLTs). Signals through G(i) and inhibition of adenylyl cyclase. May mediate brain damage by nucleotides and CysLTs following ischemia. The sequence is that of Uracil nucleotide/cysteinyl leukotriene receptor from Rattus norvegicus (Rat).